The chain runs to 2020 residues: Metacaspase-2 (2020 aa).

Composition is skewed to basic and acidic residues over residues 51 to 60 (SENDRNESIQ) and 69 to 78 (DNRKTNKSEK). 2 disordered regions span residues 51-78 (SEND…KSEK) and 573-614 (RNGN…NINN). Low complexity predominate over residues 576–614 (NINNNKNNNINNNNNNINNNNNNINNNNNNINNNNNINN).

It belongs to the peptidase C14B family.

Its subcellular location is the cytoplasm. Its activity is regulated as follows. Ca(2+) does not appear to affect catalytic activity. In terms of biological role, protease that cleaves specifically after arginine or lysine residues. May play a role in parasite growth and/or development. This chain is Metacaspase-2, found in Plasmodium falciparum (isolate 3D7).